Reading from the N-terminus, the 135-residue chain is Peptide methionine sulfoxide reductase MsrB (135 aa).

Residues 9–131 (DDYWRSKLTD…NSASIQFEEE (123 aa)) form the MsrB domain. Zn(2+) contacts are provided by C48, C51, C97, and C100. C120 functions as the Nucleophile in the catalytic mechanism.

The protein belongs to the MsrB Met sulfoxide reductase family. Zn(2+) is required as a cofactor.

The enzyme catalyses L-methionyl-[protein] + [thioredoxin]-disulfide + H2O = L-methionyl-(R)-S-oxide-[protein] + [thioredoxin]-dithiol. This Teredinibacter turnerae (strain ATCC 39867 / T7901) protein is Peptide methionine sulfoxide reductase MsrB.